We begin with the raw amino-acid sequence, 132 residues long: Phycocyanin PC645 alpha-1 subunit (132 aa).

The (2R,3E)-phycocyanobilin site is built by aspartate 54 and arginine 68. Positions 70, 76, 77, and 92 each coordinate mesobiliverdin. Proline 123 and isoleucine 125 together coordinate 15,16-dihydrobiliverdin.

The protein belongs to the phycoerythrin family. As to quaternary structure, heterotetramer of 2 different alpha chains and 2 identical beta chains which form 2 alpha-beta heterodimers within the heterotetramer. Contains two phycocyanobilin chromophores, one mesobiliverdin chromophore and one 15,16-dihydrobiliverdin chromophore with binding mediated by both the alpha and beta subunits.

The protein resides in the plastid. It localises to the chloroplast thylakoid membrane. Light-harvesting photosynthetic tetrapyrrole chromophore-protein from the phycobiliprotein complex. The polypeptide is Phycocyanin PC645 alpha-1 subunit (Chroomonas sp. (strain CCMP270)).